The primary structure comprises 580 residues: Probable mediator of RNA polymerase II transcription subunit 26a (580 aa).

Residues 108–183 enclose the TFIIS N-terminal domain; it reads DEVMRIRDIL…AEWKRLVDQW (76 aa). 3 stretches are compositionally biased toward basic and acidic residues: residues 244–255, 280–290, and 299–309; these read RHSVESKHERKS, QTRREEADVRP, and VEPKRQTKQSR. The interval 244–337 is disordered; the sequence is RHSVESKHER…RKLAGPQQDK (94 aa). A coiled-coil region spans residues 347 to 368; that stretch reads FEFAKRKLQESYHQHENAKRQR.

The protein belongs to the Mediator complex subunit 26 family. As to quaternary structure, component of the Mediator complex.

The protein resides in the nucleus. Its function is as follows. Component of the Mediator complex, a coactivator involved in the regulated transcription of nearly all RNA polymerase II-dependent genes. Mediator functions as a bridge to convey information from gene-specific regulatory proteins to the basal RNA polymerase II transcription machinery. The Mediator complex, having a compact conformation in its free form, is recruited to promoters by direct interactions with regulatory proteins and serves for the assembly of a functional preinitiation complex with RNA polymerase II and the general transcription factors. May play a role in transcription elongation. The chain is Probable mediator of RNA polymerase II transcription subunit 26a (MED26A) from Arabidopsis thaliana (Mouse-ear cress).